Reading from the N-terminus, the 1571-residue chain is Pentafunctional AROM polypeptide 2 (1571 aa).

Residues 1-380 form a 3-dehydroquinate synthase region; sequence MAEPTKISIL…YEPKASVVSN (380 aa). NAD(+)-binding positions include 44–46, 81–84, 112–114, and Asp-117; these read DTN, ENSK, and GGV. Residue Arg-128 participates in 7-phospho-2-dehydro-3-deoxy-D-arabino-heptonate binding. Position 137-138 (137-138) interacts with NAD(+); sequence TT. 7-phospho-2-dehydro-3-deoxy-D-arabino-heptonate-binding residues include Asp-144 and Lys-150. Position 159 (Lys-159) interacts with NAD(+). Position 160 (Asn-160) interacts with 7-phospho-2-dehydro-3-deoxy-D-arabino-heptonate. Residues 177–180 and Asn-188 each bind NAD(+); that span reads FIDT. Residue Glu-192 coordinates Zn(2+). Residues 192-195 and Lys-246 contribute to the 7-phospho-2-dehydro-3-deoxy-D-arabino-heptonate site; that span reads EVIK. The active-site Proton acceptor; for 3-dehydroquinate synthase activity is the Glu-256. 7-phospho-2-dehydro-3-deoxy-D-arabino-heptonate-binding positions include 260-264 and His-267; that span reads RNLLN. His-267 serves as a coordination point for Zn(2+). The active-site Proton acceptor; for 3-dehydroquinate synthase activity is His-271. His-283 and Lys-352 together coordinate 7-phospho-2-dehydro-3-deoxy-D-arabino-heptonate. His-283 contacts Zn(2+). Residues 393 to 838 are EPSP synthase; sequence VIPGVPKNLN…WDALKQKFGV (446 aa). Cys-820 serves as the catalytic For EPSP synthase activity. Positions 859 to 1051 are shikimate kinase; the sequence is NASIIIIGMR…RKKHLSFFVS (193 aa). 866 to 873 lines the ATP pocket; it reads GMRGAGKT. Residues 1052–1273 form a 3-dehydroquinase region; the sequence is LTLPDLRESG…AAPGQLSAAE (222 aa). Residue His-1175 is the Proton acceptor; for 3-dehydroquinate dehydratase activity of the active site. Lys-1203 functions as the Schiff-base intermediate with substrate; for 3-dehydroquinate dehydratase activity in the catalytic mechanism. The tract at residues 1286–1571 is shikimate dehydrogenase; the sequence is AKKFAVLGKP…NAVLGTNETK (286 aa).

The protein in the N-terminal section; belongs to the sugar phosphate cyclases superfamily. Dehydroquinate synthase family. In the 2nd section; belongs to the EPSP synthase family. This sequence in the 3rd section; belongs to the shikimate kinase family. It in the 4th section; belongs to the type-I 3-dehydroquinase family. The protein in the C-terminal section; belongs to the shikimate dehydrogenase family. As to quaternary structure, homodimer. Zn(2+) is required as a cofactor.

Its subcellular location is the cytoplasm. The catalysed reaction is 7-phospho-2-dehydro-3-deoxy-D-arabino-heptonate = 3-dehydroquinate + phosphate. It carries out the reaction 3-dehydroquinate = 3-dehydroshikimate + H2O. It catalyses the reaction shikimate + NADP(+) = 3-dehydroshikimate + NADPH + H(+). The enzyme catalyses shikimate + ATP = 3-phosphoshikimate + ADP + H(+). The catalysed reaction is 3-phosphoshikimate + phosphoenolpyruvate = 5-O-(1-carboxyvinyl)-3-phosphoshikimate + phosphate. Its pathway is metabolic intermediate biosynthesis; chorismate biosynthesis; chorismate from D-erythrose 4-phosphate and phosphoenolpyruvate: step 2/7. It functions in the pathway metabolic intermediate biosynthesis; chorismate biosynthesis; chorismate from D-erythrose 4-phosphate and phosphoenolpyruvate: step 3/7. It participates in metabolic intermediate biosynthesis; chorismate biosynthesis; chorismate from D-erythrose 4-phosphate and phosphoenolpyruvate: step 4/7. The protein operates within metabolic intermediate biosynthesis; chorismate biosynthesis; chorismate from D-erythrose 4-phosphate and phosphoenolpyruvate: step 5/7. Its pathway is metabolic intermediate biosynthesis; chorismate biosynthesis; chorismate from D-erythrose 4-phosphate and phosphoenolpyruvate: step 6/7. Its function is as follows. The AROM polypeptide catalyzes 5 consecutive enzymatic reactions in prechorismate polyaromatic amino acid biosynthesis. The sequence is that of Pentafunctional AROM polypeptide 2 from Talaromyces marneffei (strain ATCC 18224 / CBS 334.59 / QM 7333) (Penicillium marneffei).